The chain runs to 101 residues: Ferredoxin Fdx2 (101 aa).

4Fe-4S ferredoxin-type domains lie at 1–29 (MATY…EGDE) and 31–64 (YVID…PNPQ). [4Fe-4S] cluster contacts are provided by Cys9, Cys12, Cys15, Cys19, Cys38, Cys41, Cys50, and Cys54.

It depends on [4Fe-4S] cluster as a cofactor.

Ferredoxins are iron-sulfur proteins that transfer electrons in a wide variety of metabolic reactions. Fdx2 can receive electrons from both FdR_A and FdR_B ferredoxin reductases, with a preference for FdR_B compared with FdR_A, and transfer the electrons to the cytochrome P450 CYP260A1. This is Ferredoxin Fdx2 from Sorangium cellulosum (strain So ce56) (Polyangium cellulosum (strain So ce56)).